The sequence spans 121 residues: Large ribosomal subunit protein bL17 (121 aa).

The protein belongs to the bacterial ribosomal protein bL17 family. In terms of assembly, part of the 50S ribosomal subunit. Contacts protein L32.

The protein is Large ribosomal subunit protein bL17 of Mycoplasmopsis agalactiae (strain NCTC 10123 / CIP 59.7 / PG2) (Mycoplasma agalactiae).